Here is a 1039-residue protein sequence, read N- to C-terminus: Antigenic heat-stable 120 kDa protein (1039 aa).

3 disordered regions span residues 1-115 (MSKD…TSDP), 408-438 (SSIE…MPQP), and 1020-1039 (QSEN…FPPR). The span at 31–44 (PISSTANKDGNPDT) shows a compositional bias: polar residues. A compositionally biased stretch (basic and acidic residues) spans 54-69 (EYTEEQKQKLEQEQKE). Low complexity predominate over residues 85–114 (FSFTPASSTQSTPSISSLSGGISSDSQTSD). The segment covering 424–438 (ANQPLQPETSQMPQP) has biased composition (polar residues). The span at 1030 to 1039 (IKRESSFPPR) shows a compositional bias: basic and acidic residues.

The protein resides in the cytoplasm. This Rickettsia felis (strain ATCC VR-1525 / URRWXCal2) (Rickettsia azadi) protein is Antigenic heat-stable 120 kDa protein (sca4).